Here is a 114-residue protein sequence, read N- to C-terminus: FK506-binding protein 1 (114 aa).

Residues 26–114 (GDLVTIHYTG…IFDVELLKVN (89 aa)) enclose the PPIase FKBP-type domain.

Belongs to the FKBP-type PPIase family. FKBP1 subfamily.

It is found in the cytoplasm. The enzyme catalyses [protein]-peptidylproline (omega=180) = [protein]-peptidylproline (omega=0). Inhibited by both FK506 and rapamycin. Its function is as follows. PPIases accelerate the folding of proteins. It catalyzes the cis-trans isomerization of proline imidic peptide bonds in oligopeptides. This Candida glabrata (strain ATCC 2001 / BCRC 20586 / JCM 3761 / NBRC 0622 / NRRL Y-65 / CBS 138) (Yeast) protein is FK506-binding protein 1 (FPR1).